The sequence spans 71 residues: Conotoxin LvVIB (71 aa).

The first 17 residues, 1 to 17 (VLIIAVLFLTASELVTA), serve as a signal peptide directing secretion. The propeptide occupies 18–41 (DYTRDKWQYRAASLRDAMRNFRDT). 3 disulfides stabilise this stretch: Cys43-Cys57, Cys50-Cys62, and Cys56-Cys69.

This sequence belongs to the conotoxin O1 superfamily. Expressed by the venom duct.

Its subcellular location is the secreted. The protein is Conotoxin LvVIB of Conus lividus (Livid cone).